The chain runs to 297 residues: NAD(P)-dependent methylenetetrahydromethanopterin dehydrogenase (297 aa).

The protein to M.extorquens MtdA. In terms of assembly, homohexamer.

It localises to the cytoplasm. The enzyme catalyses 5,10-methylenetetrahydromethanopterin + NAD(+) = 5,10-methenyl-5,6,7,8-tetrahydromethanopterin + NADH. The catalysed reaction is 5,10-methylenetetrahydromethanopterin + NADP(+) = 5,10-methenyl-5,6,7,8-tetrahydromethanopterin + NADPH. It functions in the pathway one-carbon metabolism; formaldehyde degradation; formate from formaldehyde (H(4)MPT route): step 2/5. In terms of biological role, catalyzes the dehydrogenation of methylene-H(4)MPT. The polypeptide is NAD(P)-dependent methylenetetrahydromethanopterin dehydrogenase (mtdB) (Methylorubrum extorquens (strain ATCC 14718 / DSM 1338 / JCM 2805 / NCIMB 9133 / AM1) (Methylobacterium extorquens)).